Reading from the N-terminus, the 393-residue chain is MRYSDFTQRIAGDGAAAWDIHYRALARVEQGEEILLLSVGDPDFDTPAPIVQAAIDSLLAGNTHYADVRGKRALRQRIAERHRRRSGQAVDAEQVVVLAGAQCALYAVVQCLLNPGDEVIVAEPMYVTYEAVFGACGARVVPVPVRSENGFRVQAEEVAALITPRTRAMALNSPHNPSGASLPRATWEALAELCMAHDLWMISDEVYSELLFDGEHVSPASLPGMADRTATLNSLSKSHAMTGWRVGWVVGPAALCAHLENLALCMLYGSPEFIQDAACTALEAPLPELEAMREAYRRRRDLVIECLADSPGLRPLRPDGGMFVMVDIRPTGLSAQAFADRLLDRHGVSVLAGEAFGPSAAGHIRLGLVLGAEPLREACRRIALCAAELLGQA.

At lysine 237 the chain carries N6-(pyridoxal phosphate)lysine.

This sequence belongs to the class-I pyridoxal-phosphate-dependent aminotransferase family. Homodimer. Pyridoxal 5'-phosphate is required as a cofactor.

It carries out the reaction L-arginine + pyruvate = 5-guanidino-2-oxopentanoate + L-alanine. It participates in amino-acid degradation; L-arginine degradation. Its function is as follows. Catalyzes the conversion of L-arginine into 2-ketoarginine via transamination. L-arginine is the best substrate, but it can also use L-lysine, L-methionine, L-leucine, ornithine and L-glutamine, which indicates that it may have a broader physiological function in amino acid catabolism. This Pseudomonas aeruginosa (strain ATCC 15692 / DSM 22644 / CIP 104116 / JCM 14847 / LMG 12228 / 1C / PRS 101 / PAO1) protein is Arginine--pyruvate transaminase AruH (aruH).